Here is a 273-residue protein sequence, read N- to C-terminus: Putative B3 domain-containing protein At5g58280 (273 aa).

The TF-B3 DNA-binding region spans 127 to 218 (FVKSMVRSHV…KFKIYVFKGN (92 aa)). The disordered stretch occupies residues 225-273 (SARKRGRATTPSEEEEEEEDKDVEESGDEEHSSRATKRSSVRLLRKRKA). Acidic residues predominate over residues 236–252 (SEEEEEEEDKDVEESGD). The span at 258-273 (RATKRSSVRLLRKRKA) shows a compositional bias: basic residues.

Its subcellular location is the nucleus. The polypeptide is Putative B3 domain-containing protein At5g58280 (Arabidopsis thaliana (Mouse-ear cress)).